The primary structure comprises 316 residues: tRNA pseudouridine synthase B (316 aa).

Aspartate 47 serves as the catalytic Nucleophile.

This sequence belongs to the pseudouridine synthase TruB family. Type 1 subfamily.

The catalysed reaction is uridine(55) in tRNA = pseudouridine(55) in tRNA. Responsible for synthesis of pseudouridine from uracil-55 in the psi GC loop of transfer RNAs. This is tRNA pseudouridine synthase B from Photobacterium profundum (strain SS9).